The primary structure comprises 436 residues: ATP-dependent RNA helicase RhlB (436 aa).

The Q motif motif lies at 9–37; it reads QKFADFPLHKEVHQALNEAGFEFCTPIQA. The Helicase ATP-binding domain maps to 40 to 219; that stretch reads LPILLEKKDI…YDHMNEPEKV (180 aa). Residue 53–60 coordinates ATP; it reads AQTGTGKT. The short motif at 165-168 is the DEAD box element; the sequence is DEAD. In terms of domain architecture, Helicase C-terminal spans 243–390; it reads KMPLLLSLLE…VTSYDSDALL (148 aa). The disordered stretch occupies residues 392-436; sequence DIPPPVRIHRKPSTHTRNTRDRSSGRPQGGQRNGPRRHDKTRRHS. The segment covering 425–436 has biased composition (basic residues); the sequence is GPRRHDKTRRHS.

Belongs to the DEAD box helicase family. RhlB subfamily. As to quaternary structure, component of the RNA degradosome, which is a multiprotein complex involved in RNA processing and mRNA degradation.

The protein resides in the cytoplasm. The catalysed reaction is ATP + H2O = ADP + phosphate + H(+). Its function is as follows. DEAD-box RNA helicase involved in RNA degradation. Has RNA-dependent ATPase activity and unwinds double-stranded RNA. This is ATP-dependent RNA helicase RhlB from Shewanella pealeana (strain ATCC 700345 / ANG-SQ1).